The primary structure comprises 493 residues: Glutamyl-tRNA(Gln) amidotransferase subunit A (493 aa).

Active-site charge relay system residues include lysine 79 and serine 159. The active-site Acyl-ester intermediate is serine 183.

This sequence belongs to the amidase family. GatA subfamily. As to quaternary structure, heterotrimer of A, B and C subunits.

The enzyme catalyses L-glutamyl-tRNA(Gln) + L-glutamine + ATP + H2O = L-glutaminyl-tRNA(Gln) + L-glutamate + ADP + phosphate + H(+). Its function is as follows. Allows the formation of correctly charged Gln-tRNA(Gln) through the transamidation of misacylated Glu-tRNA(Gln) in organisms which lack glutaminyl-tRNA synthetase. The reaction takes place in the presence of glutamine and ATP through an activated gamma-phospho-Glu-tRNA(Gln). The polypeptide is Glutamyl-tRNA(Gln) amidotransferase subunit A (Brucella ovis (strain ATCC 25840 / 63/290 / NCTC 10512)).